We begin with the raw amino-acid sequence, 264 residues long: Teichoic acids export ATP-binding protein TagH (264 aa).

In terms of domain architecture, ABC transporter spans 22–243 (ERLKDVIVPF…YEKFLNDFKK (222 aa)). 57-64 (GINGSGKS) contributes to the ATP binding site.

Belongs to the ABC transporter superfamily. Teichoic acids exporter (TC 3.A.1.104.1) family. The complex is composed of two ATP-binding proteins (TagH) and two transmembrane proteins (TagG).

Its subcellular location is the cell membrane. It catalyses the reaction ATP + H2O + teichoic acidSide 1 = ADP + phosphate + teichoic acidSide 2.. Its function is as follows. Part of the ABC transporter complex TagGH involved in teichoic acids export. Responsible for energy coupling to the transport system. In Staphylococcus saprophyticus subsp. saprophyticus (strain ATCC 15305 / DSM 20229 / NCIMB 8711 / NCTC 7292 / S-41), this protein is Teichoic acids export ATP-binding protein TagH.